The following is a 257-amino-acid chain: MNPLIIKLGGVLLDSEEALERLFTALVAYRQEHQRPLVIVHGGGCLVDELMKKLSLPVVKKNGLRVTPADQIDIITGALAGSANKTLLSWAKKHDINAVGLCLGDGDSTTVTQLDESLGFVGKAEAGSPALLNTLLSAGYLPVVSSIGITAQGDLMNVNADQAATALAQTLGADLILLSDVSGILDGKGQRIAEMTAEKAEQLIAQGIITDGMIVKVNAALDAARALGRPVDIASWRHAEQLPALFSGVAIGTRILA.

Substrate is bound by residues glycine 43–glycine 44, arginine 65, and asparagine 157. ATP contacts are provided by residues aspartate 180–leucine 185 and isoleucine 208–threonine 210.

The protein belongs to the acetylglutamate kinase family. ArgB subfamily. Homodimer.

The protein resides in the cytoplasm. The catalysed reaction is N-acetyl-L-glutamate + ATP = N-acetyl-L-glutamyl 5-phosphate + ADP. Its pathway is amino-acid biosynthesis; L-arginine biosynthesis; N(2)-acetyl-L-ornithine from L-glutamate: step 2/4. Catalyzes the ATP-dependent phosphorylation of N-acetyl-L-glutamate. The sequence is that of Acetylglutamate kinase from Pectobacterium atrosepticum (strain SCRI 1043 / ATCC BAA-672) (Erwinia carotovora subsp. atroseptica).